The sequence spans 346 residues: tRNA N6-adenosine threonylcarbamoyltransferase (346 aa).

Residues histidine 111 and histidine 115 each coordinate Fe cation. Residues 134-138 (LVSGG), aspartate 167, glycine 180, and asparagine 279 each bind substrate. Residue aspartate 307 participates in Fe cation binding.

This sequence belongs to the KAE1 / TsaD family. Fe(2+) is required as a cofactor.

The protein localises to the cytoplasm. It catalyses the reaction L-threonylcarbamoyladenylate + adenosine(37) in tRNA = N(6)-L-threonylcarbamoyladenosine(37) in tRNA + AMP + H(+). In terms of biological role, required for the formation of a threonylcarbamoyl group on adenosine at position 37 (t(6)A37) in tRNAs that read codons beginning with adenine. Is involved in the transfer of the threonylcarbamoyl moiety of threonylcarbamoyl-AMP (TC-AMP) to the N6 group of A37, together with TsaE and TsaB. TsaD likely plays a direct catalytic role in this reaction. This chain is tRNA N6-adenosine threonylcarbamoyltransferase, found in Burkholderia lata (strain ATCC 17760 / DSM 23089 / LMG 22485 / NCIMB 9086 / R18194 / 383).